The following is a 258-amino-acid chain: Snake venom serine protease (258 aa).

The signal sequence occupies residues Met-1–Ala-18. Positions Gln-19–Leu-24 are excised as a propeptide. In terms of domain architecture, Peptidase S1 spans Val-25–Ala-249. 6 disulfide bridges follow: Cys-31/Cys-163, Cys-50/Cys-66, Cys-98/Cys-256, Cys-142/Cys-210, Cys-174/Cys-189, and Cys-200/Cys-225. Active-site charge relay system residues include His-65 and Asp-110. A glycan (N-linked (GlcNAc...) asparagine) is linked at Asn-154. Residue Ser-204 is the Charge relay system of the active site.

It belongs to the peptidase S1 family. Snake venom subfamily. In terms of assembly, monomer. Expressed by the venom gland.

Its subcellular location is the secreted. In terms of biological role, snake venom serine protease that may act in the hemostasis system of the prey. This is Snake venom serine protease from Lachesis stenophrys (Central American bushmaster).